Consider the following 329-residue polypeptide: NTD biosynthesis operon regulator NtdR (329 aa).

Residues 2-56 (PTIDEIAKLCNVSKTTVSRVLNNHPYVSKEKRDMILKAINELDYTPNYLARNFRR) form the HTH lacI-type domain. A DNA-binding region (H-T-H motif) is located at residues 4 to 23 (IDEIAKLCNVSKTTVSRVLN).

In terms of biological role, positively regulates the ntdABC operon and negatively regulates its own transcription. Binds to NTD to induce ntdABC transcription. This Bacillus subtilis (strain 168) protein is NTD biosynthesis operon regulator NtdR (ntdR).